A 61-amino-acid chain; its full sequence is Protein A40 homolog (61 aa).

The Cytoplasmic portion of the chain corresponds to 1 to 11 (MTMNKPKTNYA). A helical; Signal-anchor for type II membrane protein membrane pass occupies residues 12-32 (GYACCVICGLIVGIIFTATLL). Residues 33–61 (KAVERKLIHTPLIDKTIKDAYIREDCPTD) are Extracellular-facing.

It belongs to the poxviridae A40 protein family.

Its subcellular location is the host membrane. The protein is Protein A40 homolog (A45R) of Homo sapiens (Human).